The primary structure comprises 402 residues: Deoxyguanosinetriphosphate triphosphohydrolase-like protein (402 aa).

One can recognise an HD domain in the interval 69 to 217 (RLTHSLEVAQ…AAIADDIAYD (149 aa)).

Belongs to the dGTPase family. Type 2 subfamily.

In Bradyrhizobium diazoefficiens (strain JCM 10833 / BCRC 13528 / IAM 13628 / NBRC 14792 / USDA 110), this protein is Deoxyguanosinetriphosphate triphosphohydrolase-like protein.